The primary structure comprises 444 residues: Probable D-serine dehydratase (444 aa).

Lys118 carries the post-translational modification N6-(pyridoxal phosphate)lysine.

Belongs to the serine/threonine dehydratase family. DsdA subfamily. Requires pyridoxal 5'-phosphate as cofactor.

It catalyses the reaction D-serine = pyruvate + NH4(+). The protein is Probable D-serine dehydratase of Acinetobacter baumannii (strain ATCC 17978 / DSM 105126 / CIP 53.77 / LMG 1025 / NCDC KC755 / 5377).